The sequence spans 383 residues: Inactive serine protease 54 (383 aa).

The first 20 residues, 1-20, serve as a signal peptide directing secretion; sequence MAEMRGMLLMLLYISHSSSA. The Peptidase S1 domain maps to 21-258; sequence ICGIQKATIA…YSDWITAKTR (238 aa). An N-linked (GlcNAc...) asparagine glycan is attached at Asn113. 3 disulfides stabilise this stretch: Cys154–Cys216, Cys185–Cys195, and Cys206–Cys237. Positions 305–334 are disordered; sequence QGQRMSTKSNKQKDAGQNFRVNRQPETSGP. Residues 323–334 show a composition bias toward polar residues; the sequence is FRVNRQPETSGP.

The protein belongs to the peptidase S1 family. Plasma kallikrein subfamily.

Its subcellular location is the secreted. This Mus musculus (Mouse) protein is Inactive serine protease 54 (Prss54).